Consider the following 331-residue polypeptide: Protein RecA (331 aa).

67-74 (GPESSGKT) contacts ATP.

It belongs to the RecA family.

The protein resides in the cytoplasm. In terms of biological role, can catalyze the hydrolysis of ATP in the presence of single-stranded DNA, the ATP-dependent uptake of single-stranded DNA by duplex DNA, and the ATP-dependent hybridization of homologous single-stranded DNAs. It interacts with LexA causing its activation and leading to its autocatalytic cleavage. The chain is Protein RecA from Wigglesworthia glossinidia brevipalpis.